We begin with the raw amino-acid sequence, 280 residues long: 4-deoxy-L-threo-5-hexosulose-uronate ketol-isomerase (280 aa).

His198, His200, Glu205, and His247 together coordinate Zn(2+).

Belongs to the KduI family. Zn(2+) is required as a cofactor.

The enzyme catalyses 5-dehydro-4-deoxy-D-glucuronate = 3-deoxy-D-glycero-2,5-hexodiulosonate. It participates in glycan metabolism; pectin degradation; 2-dehydro-3-deoxy-D-gluconate from pectin: step 4/5. Catalyzes the isomerization of 5-dehydro-4-deoxy-D-glucuronate to 3-deoxy-D-glycero-2,5-hexodiulosonate. The protein is 4-deoxy-L-threo-5-hexosulose-uronate ketol-isomerase of Lachnospira eligens (strain ATCC 27750 / DSM 3376 / VPI C15-48 / C15-B4) (Eubacterium eligens).